Reading from the N-terminus, the 88-residue chain is Large ribosomal subunit protein bL27 (88 aa).

Positions 1-13 are enriched in polar residues; it reads MATKKGASSSSNG. Residues 1–23 are disordered; it reads MATKKGASSSSNGRDSEAKRLGV.

The protein belongs to the bacterial ribosomal protein bL27 family.

This chain is Large ribosomal subunit protein bL27, found in Corynebacterium urealyticum (strain ATCC 43042 / DSM 7109).